A 276-amino-acid chain; its full sequence is 4-deoxy-L-threo-5-hexosulose-uronate ketol-isomerase (276 aa).

Residues His194, His196, Glu201, and His243 each coordinate Zn(2+).

This sequence belongs to the KduI family. Zn(2+) is required as a cofactor.

It catalyses the reaction 5-dehydro-4-deoxy-D-glucuronate = 3-deoxy-D-glycero-2,5-hexodiulosonate. Its pathway is glycan metabolism; pectin degradation; 2-dehydro-3-deoxy-D-gluconate from pectin: step 4/5. In terms of biological role, catalyzes the isomerization of 5-dehydro-4-deoxy-D-glucuronate to 3-deoxy-D-glycero-2,5-hexodiulosonate. This chain is 4-deoxy-L-threo-5-hexosulose-uronate ketol-isomerase, found in Halalkalibacterium halodurans (strain ATCC BAA-125 / DSM 18197 / FERM 7344 / JCM 9153 / C-125) (Bacillus halodurans).